The following is a 196-amino-acid chain: MGWWLFPILGYFIGSIPFSYLIPKWLKGIDVRKVGSGNVGATNAIRTTGPVVGGICLLLDALKGFFPVFIATTFSGDPKLVSLTAIATVLGHDFPIFMKFKGGKGVASTLGIIFCLSWPTGIVFTLTWLVIVMLTKYASLGSLVALYISALLGYLFKGYDTGMLILILAVLSTLRHSENIQRLLNGTERKVNLFKR.

The next 5 membrane-spanning stretches (helical) occupy residues 2–22 (GWWL…SYLI), 51–71 (VVGG…VFIA), 80–100 (LVSL…FMKF), 112–132 (IIFC…LVIV), and 137–156 (YASL…GYLF).

Belongs to the PlsY family. In terms of assembly, probably interacts with PlsX.

The protein localises to the cell inner membrane. The enzyme catalyses an acyl phosphate + sn-glycerol 3-phosphate = a 1-acyl-sn-glycero-3-phosphate + phosphate. It participates in lipid metabolism; phospholipid metabolism. In terms of biological role, catalyzes the transfer of an acyl group from acyl-phosphate (acyl-PO(4)) to glycerol-3-phosphate (G3P) to form lysophosphatidic acid (LPA). This enzyme utilizes acyl-phosphate as fatty acyl donor, but not acyl-CoA or acyl-ACP. The polypeptide is Glycerol-3-phosphate acyltransferase (Thermotoga petrophila (strain ATCC BAA-488 / DSM 13995 / JCM 10881 / RKU-1)).